Here is a 218-residue protein sequence, read N- to C-terminus: Cytochrome P450 3A19 (218 aa).

C153 contributes to the heme binding site.

The protein belongs to the cytochrome P450 family. It depends on heme as a cofactor.

Its subcellular location is the endoplasmic reticulum membrane. The protein localises to the microsome membrane. It carries out the reaction an organic molecule + reduced [NADPH--hemoprotein reductase] + O2 = an alcohol + oxidized [NADPH--hemoprotein reductase] + H2O + H(+). Cytochromes P450 are a group of heme-thiolate monooxygenases. In liver microsomes, this enzyme is involved in an NADPH-dependent electron transport pathway. It oxidizes a variety of structurally unrelated compounds, including steroids, fatty acids, and xenobiotics. The protein is Cytochrome P450 3A19 (CYP3A19) of Capra hircus aegagrus (Wild goat).